The chain runs to 305 residues: Methionyl-tRNA formyltransferase (305 aa).

111–114 (SILP) is a binding site for (6S)-5,6,7,8-tetrahydrofolate.

This sequence belongs to the Fmt family.

It catalyses the reaction L-methionyl-tRNA(fMet) + (6R)-10-formyltetrahydrofolate = N-formyl-L-methionyl-tRNA(fMet) + (6S)-5,6,7,8-tetrahydrofolate + H(+). Attaches a formyl group to the free amino group of methionyl-tRNA(fMet). The formyl group appears to play a dual role in the initiator identity of N-formylmethionyl-tRNA by promoting its recognition by IF2 and preventing the misappropriation of this tRNA by the elongation apparatus. This is Methionyl-tRNA formyltransferase from Wolinella succinogenes (strain ATCC 29543 / DSM 1740 / CCUG 13145 / JCM 31913 / LMG 7466 / NCTC 11488 / FDC 602W) (Vibrio succinogenes).